Here is a 474-residue protein sequence, read N- to C-terminus: MNYDALQLSGRKVLVLGLGDTGLSCARWLSVHGADVSVADSREAPPHAARLAETLPQVALFTGPFEAAHLAAADMLVLSPGVPLSEPAVAQAVAQGVEAVGDVELFARALAVLNAQRAALPAPQAAMRVIAITGSNGKSTVTAMCGDMCRMAGLTVCVAGNIGLPVLDALHEIEQGAAPLPQVWVLELSSFQLETTSSLDATAAAVLNLSEDHMDRYPDMAAYAAAKARIFSGNGVQVLNRDDPRTLAMAIPGRHVVSFGLDRCPTDENFGLCEDELCLGGDMLMPLSVLAVPGLHNAANALAALALTRALDLPIEALLRGLMHFKGLPHRVEKVADIDGVTWYDDSKGTNVGATEAALYGMGRRKAVVILGGDGKGQDFGPLKAAVAANARAVVLIGRDAVAIEAAIEDSGVASYRADTLPDAVEQAARLAEPGDAVLLSPACASFDMFRNYVHRAEVFVDAVKKLAAQRAQV.

134-140 serves as a coordination point for ATP; it reads GSNGKST.

Belongs to the MurCDEF family.

The protein localises to the cytoplasm. The catalysed reaction is UDP-N-acetyl-alpha-D-muramoyl-L-alanine + D-glutamate + ATP = UDP-N-acetyl-alpha-D-muramoyl-L-alanyl-D-glutamate + ADP + phosphate + H(+). It functions in the pathway cell wall biogenesis; peptidoglycan biosynthesis. Its function is as follows. Cell wall formation. Catalyzes the addition of glutamate to the nucleotide precursor UDP-N-acetylmuramoyl-L-alanine (UMA). The protein is UDP-N-acetylmuramoylalanine--D-glutamate ligase of Thiobacillus denitrificans (strain ATCC 25259 / T1).